Here is a 469-residue protein sequence, read N- to C-terminus: Aryl-phospho-beta-D-glucosidase BglH (469 aa).

The active-site Proton donor is the Glu175. The Nucleophile role is filled by Glu368.

The protein belongs to the glycosyl hydrolase 1 family.

It catalyses the reaction 6-phospho-beta-D-glucosyl-(1-&gt;4)-D-glucose + H2O = D-glucose 6-phosphate + D-glucose. Functionally, catalyzes the hydrolysis of aryl-phospho-beta-D-glucosides such as 4-methylumbelliferyl-phospho-beta-D-glucopyranoside (MUG-P), phosphoarbutin and phosphosalicin. Plays a major role in the utilization of arbutin or salicin as the sole carbon source. BglA and BglH are the major proteins contributing to hydrolysis of MUG-P by extracts of late-exponential-phase or stationary-phase B.subtilis cells. The chain is Aryl-phospho-beta-D-glucosidase BglH (bglH) from Bacillus subtilis (strain 168).